A 494-amino-acid chain; its full sequence is 4-trimethylaminobutyraldehyde dehydrogenase (494 aa).

N-acetylserine; in 4-trimethylaminobutyraldehyde dehydrogenase, N-terminally processed is present on serine 2. Lysine 30 is modified (N6-acetyllysine; alternate). At lysine 30 the chain carries N6-succinyllysine; alternate. Position 59 is an N6-succinyllysine (lysine 59). Residues lysine 180 and 232-236 (GSVPT) each bind NAD(+). Glutamate 254 functions as the Proton acceptor in the catalytic mechanism. The active-site Nucleophile is cysteine 288. Residue lysine 298 is modified to N6-acetyllysine. Lysine 303 is modified (N6-acetyllysine; alternate). Lysine 303 bears the N6-succinyllysine; alternate mark. The residue at position 344 (lysine 344) is an N6-acetyllysine. NAD(+) is bound at residue glutamate 391.

This sequence belongs to the aldehyde dehydrogenase family. In terms of assembly, homotetramer. Detected in brain (at protein level). High expression in adult liver, skeletal muscle, and kidney. Low levels in heart, pancreas, lung and brain. Expressed in all regions of the brain. Expression levels are variable in the different brain areas, with the highest levels in the spinal cord and the lowest in the occipital pole.

It is found in the cytoplasm. The protein localises to the cytosol. The catalysed reaction is 4-(trimethylamino)butanal + NAD(+) + H2O = 4-(trimethylamino)butanoate + NADH + 2 H(+). It carries out the reaction an aldehyde + NAD(+) + H2O = a carboxylate + NADH + 2 H(+). The enzyme catalyses 4-aminobutanal + NAD(+) + H2O = 4-aminobutanoate + NADH + 2 H(+). It catalyses the reaction formaldehyde + NAD(+) + H2O = formate + NADH + 2 H(+). The catalysed reaction is acetaldehyde + NAD(+) + H2O = acetate + NADH + 2 H(+). It carries out the reaction imidazole-4-acetaldehyde + NAD(+) + H2O = imidazole-4-acetate + NADH + 2 H(+). The enzyme catalyses acrolein + NAD(+) + H2O = acrylate + NADH + 2 H(+). It catalyses the reaction (5-hydroxyindol-3-yl)acetaldehyde + NAD(+) + H2O = (5-hydroxyindol-3-yl)acetate + NADH + 2 H(+). The catalysed reaction is 3,4-dihydroxyphenylacetaldehyde + NAD(+) + H2O = 3,4-dihydroxyphenylacetate + NADH + 2 H(+). It carries out the reaction spermine monoaldehyde + NAD(+) + H2O = N-(2-carboxyethyl)spermidine + NADH + 2 H(+). The enzyme catalyses propanal + NAD(+) + H2O = propanoate + NADH + 2 H(+). It catalyses the reaction butanal + NAD(+) + H2O = butanoate + NADH + 2 H(+). The catalysed reaction is pentanal + NAD(+) + H2O = pentanoate + NADH + 2 H(+). It carries out the reaction hexanal + NAD(+) + H2O = hexanoate + NADH + 2 H(+). It functions in the pathway amine and polyamine biosynthesis; carnitine biosynthesis. Converts gamma-trimethylaminobutyraldehyde into gamma-butyrobetaine with high efficiency (in vitro). Can catalyze the irreversible oxidation of a broad range of aldehydes to the corresponding acids in an NAD-dependent reaction, but with low efficiency. Catalyzes the oxidation of aldehydes arising from biogenic amines and polyamines. This chain is 4-trimethylaminobutyraldehyde dehydrogenase (ALDH9A1), found in Homo sapiens (Human).